A 146-amino-acid polypeptide reads, in one-letter code: Aspartate carbamoyltransferase regulatory chain (146 aa).

Residues C102, C107, C131, and C134 each contribute to the Zn(2+) site.

The protein belongs to the PyrI family. As to quaternary structure, contains catalytic and regulatory chains. Zn(2+) serves as cofactor.

In terms of biological role, involved in allosteric regulation of aspartate carbamoyltransferase. This chain is Aspartate carbamoyltransferase regulatory chain, found in Clostridium botulinum (strain Okra / Type B1).